A 201-amino-acid polypeptide reads, in one-letter code: Orotate phosphoribosyltransferase (201 aa).

113-121 (EDIITTGKS) contributes to the 5-phospho-alpha-D-ribose 1-diphosphate binding site. 2 residues coordinate orotate: Thr-117 and Arg-145.

It belongs to the purine/pyrimidine phosphoribosyltransferase family. PyrE subfamily. As to quaternary structure, homodimer. The cofactor is Mg(2+).

The catalysed reaction is orotidine 5'-phosphate + diphosphate = orotate + 5-phospho-alpha-D-ribose 1-diphosphate. It participates in pyrimidine metabolism; UMP biosynthesis via de novo pathway; UMP from orotate: step 1/2. Catalyzes the transfer of a ribosyl phosphate group from 5-phosphoribose 1-diphosphate to orotate, leading to the formation of orotidine monophosphate (OMP). This chain is Orotate phosphoribosyltransferase, found in Helicobacter pylori (strain ATCC 700392 / 26695) (Campylobacter pylori).